Consider the following 372-residue polypeptide: tRNA 2-selenouridine synthase (372 aa).

The Rhodanese domain maps to 17 to 140 (FLQDIPLIDV…LRNFLLTTLE (124 aa)). Residue Cys-100 is the S-selanylcysteine intermediate of the active site.

Belongs to the SelU family. In terms of assembly, monomer.

The enzyme catalyses 5-methylaminomethyl-2-thiouridine(34) in tRNA + selenophosphate + (2E)-geranyl diphosphate + H2O + H(+) = 5-methylaminomethyl-2-selenouridine(34) in tRNA + (2E)-thiogeraniol + phosphate + diphosphate. It catalyses the reaction 5-methylaminomethyl-2-thiouridine(34) in tRNA + (2E)-geranyl diphosphate = 5-methylaminomethyl-S-(2E)-geranyl-thiouridine(34) in tRNA + diphosphate. The catalysed reaction is 5-methylaminomethyl-S-(2E)-geranyl-thiouridine(34) in tRNA + selenophosphate + H(+) = 5-methylaminomethyl-2-(Se-phospho)selenouridine(34) in tRNA + (2E)-thiogeraniol. It carries out the reaction 5-methylaminomethyl-2-(Se-phospho)selenouridine(34) in tRNA + H2O = 5-methylaminomethyl-2-selenouridine(34) in tRNA + phosphate. In terms of biological role, involved in the post-transcriptional modification of the uridine at the wobble position (U34) of tRNA(Lys), tRNA(Glu) and tRNA(Gln). Catalyzes the conversion of 2-thiouridine (S2U-RNA) to 2-selenouridine (Se2U-RNA). Acts in a two-step process involving geranylation of 2-thiouridine (S2U) to S-geranyl-2-thiouridine (geS2U) and subsequent selenation of the latter derivative to 2-selenouridine (Se2U) in the tRNA chain. This chain is tRNA 2-selenouridine synthase, found in Serratia proteamaculans (strain 568).